A 382-amino-acid polypeptide reads, in one-letter code: Putative acetyl-CoA C-acetyltransferase VraB (382 aa).

Cys-86 acts as the Acyl-thioester intermediate in catalysis. Residue His-338 is the Proton acceptor of the active site.

Belongs to the thiolase-like superfamily. Thiolase family.

The sequence is that of Putative acetyl-CoA C-acetyltransferase VraB (vraB) from Staphylococcus epidermidis (strain ATCC 12228 / FDA PCI 1200).